Consider the following 226-residue polypeptide: PKHD-type hydroxylase BP3529 (226 aa).

The region spanning 78–178 (KIFPPLFNRY…RISAFFWLQS (101 aa)) is the Fe2OG dioxygenase domain. His-96, Asp-98, and His-159 together coordinate Fe cation. 2-oxoglutarate is bound at residue Arg-169.

The cofactor is Fe(2+). L-ascorbate is required as a cofactor.

The protein is PKHD-type hydroxylase BP3529 of Bordetella pertussis (strain Tohama I / ATCC BAA-589 / NCTC 13251).